We begin with the raw amino-acid sequence, 81 residues long: Photosystem I iron-sulfur center (81 aa).

2 4Fe-4S ferredoxin-type domains span residues 2-31 (AHIVKIYDTCIGCTQCVRACPLDVLEMVPW) and 39-68 (MASAPRTEDCVGCKRCETACPTDFLSVRVY). 8 residues coordinate [4Fe-4S] cluster: cysteine 11, cysteine 14, cysteine 17, cysteine 21, cysteine 48, cysteine 51, cysteine 54, and cysteine 58.

In terms of assembly, the eukaryotic PSI reaction center is composed of at least 11 subunits. It depends on [4Fe-4S] cluster as a cofactor.

The protein localises to the plastid. Its subcellular location is the chloroplast thylakoid membrane. The catalysed reaction is reduced [plastocyanin] + hnu + oxidized [2Fe-2S]-[ferredoxin] = oxidized [plastocyanin] + reduced [2Fe-2S]-[ferredoxin]. Apoprotein for the two 4Fe-4S centers FA and FB of photosystem I (PSI); essential for photochemical activity. FB is the terminal electron acceptor of PSI, donating electrons to ferredoxin. The C-terminus interacts with PsaA/B/D and helps assemble the protein into the PSI complex. Required for binding of PsaD and PsaE to PSI. PSI is a plastocyanin/cytochrome c6-ferredoxin oxidoreductase, converting photonic excitation into a charge separation, which transfers an electron from the donor P700 chlorophyll pair to the spectroscopically characterized acceptors A0, A1, FX, FA and FB in turn. In Chlamydomonas reinhardtii (Chlamydomonas smithii), this protein is Photosystem I iron-sulfur center.